The following is a 277-amino-acid chain: Urease accessory protein UreD (277 aa).

Belongs to the UreD family. UreD, UreF and UreG form a complex that acts as a GTP-hydrolysis-dependent molecular chaperone, activating the urease apoprotein by helping to assemble the nickel containing metallocenter of UreC. The UreE protein probably delivers the nickel.

The protein localises to the cytoplasm. Its function is as follows. Required for maturation of urease via the functional incorporation of the urease nickel metallocenter. This is Urease accessory protein UreD from Yersinia pestis bv. Antiqua (strain Antiqua).